Here is a 91-residue protein sequence, read N- to C-terminus: Small ribosomal subunit protein bS16 (91 aa).

It belongs to the bacterial ribosomal protein bS16 family.

In Staphylococcus epidermidis (strain ATCC 35984 / DSM 28319 / BCRC 17069 / CCUG 31568 / BM 3577 / RP62A), this protein is Small ribosomal subunit protein bS16.